A 288-amino-acid polypeptide reads, in one-letter code: Probable aquaporin PIP1-2 (288 aa).

A disordered region spans residues 1 to 37; the sequence is MEGKEEDVRLGANKFSERQPIGTAAQGSDDKDYKEPP. Transmembrane regions (helical) follow at residues 57–77 and 92–114; these read IAEF…VMGV and IAWS…SGGH. Residues 116–118 carry the NPA 1 motif; that stretch reads NPA. 3 helical membrane passes run 135–155, 177–197, and 211–231; these read LFYM…VKGF, GDGL…VFSA, and ILAP…TIPI. Positions 237 to 239 match the NPA 2 motif; it reads NPA. The chain crosses the membrane as a helical span at residues 259-279; that stretch reads IFWVGPFIGAALAAIYHQVVI.

It belongs to the MIP/aquaporin (TC 1.A.8) family. PIP (TC 1.A.8.11) subfamily. As to expression, expressed in roots, leaves and anthers.

It localises to the cell membrane. Aquaporins facilitate the transport of water and small neutral solutes across cell membranes. The polypeptide is Probable aquaporin PIP1-2 (PIP1-2) (Oryza sativa subsp. japonica (Rice)).